The chain runs to 387 residues: Galactokinase (387 aa).

33–36 (EHID) contacts substrate. Residues Ser67 and 124 to 130 (GAGLSSS) contribute to the ATP site. Mg(2+)-binding residues include Ser130 and Glu162. Asp174 acts as the Proton acceptor in catalysis. Residue Tyr224 participates in substrate binding.

Belongs to the GHMP kinase family. GalK subfamily.

Its subcellular location is the cytoplasm. The enzyme catalyses alpha-D-galactose + ATP = alpha-D-galactose 1-phosphate + ADP + H(+). It functions in the pathway carbohydrate metabolism; galactose metabolism. Catalyzes the transfer of the gamma-phosphate of ATP to D-galactose to form alpha-D-galactose-1-phosphate (Gal-1-P). This is Galactokinase from Clostridium perfringens (strain 13 / Type A).